The primary structure comprises 252 residues: MPDNEGQHSVARRDGGWKRVVLKLSGEAFAGEEQLGISPKVVGYIAQAIAEAVAKGIQVAVVIGGGNMFRGAELSQGGMERSRADYMGMLGTVINCLALQDFLERLGIETRVQTAIHMSQVAEAYIPRRAIRHLEKGRVVIFGAGLGAPFFSTDTAAAQRALEIGAQAVLKGTQVDGVYDSDPRKNPAAVRFDRLDYNEVLTRGLKVMDATAVSLCMDNGLPIVVFDLMGKGNILRAVQGEKIGTIVCPPDV.

23 to 26 contributes to the ATP binding site; that stretch reads KLSG. Position 65 (Gly65) interacts with UMP. Residues Gly66 and Arg70 each coordinate ATP. UMP-binding positions include Asp85 and 146 to 153; that span reads LGAPFFST. ATP is bound by residues Thr173, Gln174, Tyr179, and Asp182.

The protein belongs to the UMP kinase family. In terms of assembly, homohexamer.

Its subcellular location is the cytoplasm. It catalyses the reaction UMP + ATP = UDP + ADP. The protein operates within pyrimidine metabolism; CTP biosynthesis via de novo pathway; UDP from UMP (UMPK route): step 1/1. Inhibited by UTP. Functionally, catalyzes the reversible phosphorylation of UMP to UDP. This chain is Uridylate kinase, found in Thermobifida fusca (strain YX).